The following is a 1502-amino-acid chain: Ras guanine nucleotide exchange factor P (1502 aa).

The Calponin-homology (CH) domain occupies Phe84–Glu187. Disordered regions lie at residues Ala216 to Glu242, Gln325 to Asn436, Glu456 to Gly534, and Thr589 to Asn935. 4 stretches are compositionally biased toward low complexity: residues Ser218 to Glu242, Gln325 to Thr345, Thr371 to His400, and Ser407 to Thr421. Residues Gln287–Gln328 adopt a coiled-coil conformation. Over residues Pro422–Asn436 the composition is skewed to polar residues. Residues Glu451–Lys515 adopt a coiled-coil conformation. A compositionally biased stretch (low complexity) spans Asn458–Asn508. Residues His518–Pro528 are compositionally biased toward pro residues. 5 stretches are compositionally biased toward low complexity: residues Thr589 to Asn646, Thr663 to Ile675, Ser686 to Pro719, Asn764 to Ser790, and Asn813 to Asn853. Residues Leu861 to Asn876 show a composition bias toward polar residues. A compositionally biased stretch (low complexity) spans Thr883–Asn935. Residues Val1032–Gln1076 are a coiled coil. An N-terminal Ras-GEF domain is found at Gly1102–Pro1249. In terms of domain architecture, Ras-GEF spans Asp1267–Arg1498.

In terms of biological role, promotes the exchange of Ras-bound GDP by GTP. The polypeptide is Ras guanine nucleotide exchange factor P (gefP) (Dictyostelium discoideum (Social amoeba)).